The sequence spans 121 residues: Large ribosomal subunit protein bL20 (121 aa).

Belongs to the bacterial ribosomal protein bL20 family.

Binds directly to 23S ribosomal RNA and is necessary for the in vitro assembly process of the 50S ribosomal subunit. It is not involved in the protein synthesizing functions of that subunit. This is Large ribosomal subunit protein bL20 from Chlamydia caviae (strain ATCC VR-813 / DSM 19441 / 03DC25 / GPIC) (Chlamydophila caviae).